The chain runs to 267 residues: Putative carbamate hydrolase RutD (267 aa).

The AB hydrolase-1 domain maps to 14–115; sequence PTLVLSAGLG…EKLVVVNGWP (102 aa).

Belongs to the AB hydrolase superfamily. Hydrolase RutD family.

The enzyme catalyses carbamate + 2 H(+) = NH4(+) + CO2. In terms of biological role, involved in pyrimidine catabolism. May facilitate the hydrolysis of carbamate, a reaction that can also occur spontaneously. The sequence is that of Putative carbamate hydrolase RutD from Serratia proteamaculans (strain 568).